The sequence spans 158 residues: PRA1 family protein 2 (158 aa).

A run of 4 helical transmembrane segments spans residues 36–58 (NLNF…TLFT), 62–79 (LLVA…LFFV), 88–108 (FAVL…VIVI), and 113–133 (GLTL…HSAL).

It belongs to the PRA1 family.

It localises to the membrane. In terms of biological role, may act as a general Rab protein regulator. The protein is PRA1 family protein 2 (prafB) of Dictyostelium discoideum (Social amoeba).